Consider the following 591-residue polypeptide: Autotransporter adhesin NhhA (591 aa).

The first 51 residues, 1-51, serve as a signal peptide directing secretion; it reads MNKIYRIIWNSALNAWVVVSELTRNHTKRASATVKTAVLATLLFATVQASA. The interval 52–503 is surface exposed passenger domain; sequence NNEEQEEDLY…TNVAQLKGVA (452 aa). Positions 504 to 591 are translocator domain; that stretch reads QNLNNRIDNV…GASASVGYQW (88 aa). The next 4 membrane-spanning stretches (beta stranded) occupy residues 537 to 547, 551 to 561, 570 to 576, and 580 to 591; these read GKSMMAIGGGT, EAGYAIGYSSI, KGTASGN, and HFGASASVGYQW.

It belongs to the autotransporter-2 (AT-2) (TC 1.B.40) family. As to quaternary structure, homotrimer.

The protein localises to the cell surface. Its subcellular location is the cell outer membrane. Its function is as follows. Involved in adhesion of capsulated meningococci to host epithelial cells. Interacts with laminin and heparan sulfate, promoting the adherence to the extracellular matrix (ECM) components. This is Autotransporter adhesin NhhA from Neisseria meningitidis serogroup B (strain ATCC BAA-335 / MC58).